A 185-amino-acid chain; its full sequence is Elongation factor P (185 aa).

Belongs to the elongation factor P family.

It is found in the cytoplasm. Its pathway is protein biosynthesis; polypeptide chain elongation. Its function is as follows. Involved in peptide bond synthesis. Stimulates efficient translation and peptide-bond synthesis on native or reconstituted 70S ribosomes in vitro. Probably functions indirectly by altering the affinity of the ribosome for aminoacyl-tRNA, thus increasing their reactivity as acceptors for peptidyl transferase. The sequence is that of Elongation factor P from Bacillus licheniformis (strain ATCC 14580 / DSM 13 / JCM 2505 / CCUG 7422 / NBRC 12200 / NCIMB 9375 / NCTC 10341 / NRRL NRS-1264 / Gibson 46).